A 196-amino-acid polypeptide reads, in one-letter code: Large ribosomal subunit protein bL9c (196 aa).

The N-terminal 41 residues, 1-41 (MASTTSTLSLSWSNSFHSFAGAISEPQKSPENCRVMLPIVA), are a transit peptide targeting the chloroplast.

Component of the chloroplast large ribosomal subunit (LSU). Mature 70S chloroplast ribosomes of higher plants consist of a small (30S) and a large (50S) subunit. The 30S small subunit contains 1 molecule of ribosomal RNA (16S rRNA) and 24 different proteins. The 50S large subunit contains 3 rRNA molecules (23S, 5S and 4.5S rRNA) and 33 different proteins.

The protein localises to the plastid. It is found in the chloroplast. Its function is as follows. Component of the chloroplast ribosome (chloro-ribosome), a dedicated translation machinery responsible for the synthesis of chloroplast genome-encoded proteins, including proteins of the transcription and translation machinery and components of the photosynthetic apparatus. This Spinacia oleracea (Spinach) protein is Large ribosomal subunit protein bL9c (RPL9).